A 390-amino-acid polypeptide reads, in one-letter code: S-adenosylmethionine synthase 4 (390 aa).

Position 9 (Glu9) interacts with Mg(2+). His15 is an ATP binding site. Residue Glu43 coordinates K(+). The L-methionine site is built by Glu56 and Gln99. ATP contacts are provided by residues 167 to 169 (DGK), 235 to 238 (SGRF), Asp246, 252 to 253 (RK), Ala269, Lys273, and Lys277. Asp246 serves as a coordination point for L-methionine. Lys277 lines the L-methionine pocket.

This sequence belongs to the AdoMet synthase family. As to quaternary structure, homotetramer. The cofactor is Mn(2+). Mg(2+) is required as a cofactor. It depends on Co(2+) as a cofactor. K(+) serves as cofactor. As to expression, mostly expressed in flowers, seedpods and roots, and, to a lower extent, in stems and leaves.

Its subcellular location is the cytoplasm. It carries out the reaction L-methionine + ATP + H2O = S-adenosyl-L-methionine + phosphate + diphosphate. It functions in the pathway amino-acid biosynthesis; S-adenosyl-L-methionine biosynthesis; S-adenosyl-L-methionine from L-methionine: step 1/1. Functionally, catalyzes the formation of S-adenosylmethionine from methionine and ATP. The reaction comprises two steps that are both catalyzed by the same enzyme: formation of S-adenosylmethionine (AdoMet) and triphosphate, and subsequent hydrolysis of the triphosphate. In Brassica juncea (Indian mustard), this protein is S-adenosylmethionine synthase 4 (MSAMS4).